The sequence spans 158 residues: D-aminoacyl-tRNA deacylase (158 aa).

The Gly-cisPro motif, important for rejection of L-amino acids signature appears at 143-144; that stretch reads GP.

Belongs to the DTD family. As to quaternary structure, homodimer.

It is found in the cytoplasm. It catalyses the reaction glycyl-tRNA(Ala) + H2O = tRNA(Ala) + glycine + H(+). It carries out the reaction a D-aminoacyl-tRNA + H2O = a tRNA + a D-alpha-amino acid + H(+). In terms of biological role, an aminoacyl-tRNA editing enzyme that deacylates mischarged D-aminoacyl-tRNAs. Also deacylates mischarged glycyl-tRNA(Ala), protecting cells against glycine mischarging by AlaRS. Acts via tRNA-based rather than protein-based catalysis; rejects L-amino acids rather than detecting D-amino acids in the active site. By recycling D-aminoacyl-tRNA to D-amino acids and free tRNA molecules, this enzyme counteracts the toxicity associated with the formation of D-aminoacyl-tRNA entities in vivo and helps enforce protein L-homochirality. The protein is D-aminoacyl-tRNA deacylase of Solidesulfovibrio magneticus (strain ATCC 700980 / DSM 13731 / RS-1) (Desulfovibrio magneticus).